Here is a 31-residue protein sequence, read N- to C-terminus: Cyclotide mech-4 (31 aa).

A cross-link (cyclopeptide (Gly-Asp)) is located at residues 1-31; that stretch reads GSIPCGESCVYIPCISSLLGCSCKSKVCYKD. Disulfide bonds link Cys-5–Cys-21, Cys-9–Cys-23, and Cys-14–Cys-28.

This is a cyclic peptide. Post-translationally, contains 3 disulfide bonds.

Probably participates in a plant defense mechanism (Potential). Binds to and induces leakage in phospholipd membranes, particularly ones containing 1-palmitoyl-2-oleophosphatidylethanolamine (POPE). The sequence is that of Cyclotide mech-4 from Melicytus chathamicus (Chatham Island mahoe).